An 80-amino-acid chain; its full sequence is Serine rich endogenous peptide 18 (80 aa).

An N-terminal signal peptide occupies residues 1–25; it reads MYNVVVCLLTLSFLLLTGLSNTAEA. The SCOOP motif signature appears at 45–59; that stretch reads KAEVGGSCSPHAHGR. The interval 50-80 is disordered; sequence GSCSPHAHGRGPPNRPGSSNIPGSPKRCTKP. Positions 51-53 match the SxS motif essential for MIK2 binding motif; that stretch reads SCS.

The protein belongs to the serine rich endogenous peptide (SCOOP) phytocytokine family. As to quaternary structure, interacts with MIK2 (via extracellular leucine-rich repeat domain); this interaction triggers the formation of complex between MIK2 and the BAK1/SERK3 and SERK4 coreceptors, and subsequent BAK1 activation by phosphorylation.

The protein localises to the cell membrane. The protein resides in the secreted. It localises to the extracellular space. It is found in the apoplast. Brassicaceae-specific phytocytokine (plant endogenous peptide released into the apoplast) perceived by MIK2 in a BAK1/SERK3 and SERK4 coreceptors-dependent manner, that modulates various physiological and antimicrobial processes including growth prevention and reactive oxygen species (ROS) response regulation. This Arabidopsis thaliana (Mouse-ear cress) protein is Serine rich endogenous peptide 18.